A 770-amino-acid polypeptide reads, in one-letter code: Conserved oligomeric Golgi complex subunit 7 (770 aa).

It belongs to the COG7 family. In terms of assembly, component of the conserved oligomeric Golgi complex which is composed of eight different subunits and is required for normal Golgi morphology and localization.

It is found in the golgi apparatus membrane. In terms of biological role, required for normal Golgi function. The polypeptide is Conserved oligomeric Golgi complex subunit 7 (COG7) (Homo sapiens (Human)).